The sequence spans 313 residues: Ornithine carbamoyltransferase (313 aa).

Residues 61–64 (STRT), Gln-88, Arg-112, and 139–142 (HPCQ) each bind carbamoyl phosphate. Residues Asn-170, Asp-228, and 232–233 (SM) each bind L-ornithine. Residues 268 to 269 (CL) and Arg-296 contribute to the carbamoyl phosphate site.

This sequence belongs to the aspartate/ornithine carbamoyltransferase superfamily. OTCase family.

It localises to the cytoplasm. It catalyses the reaction carbamoyl phosphate + L-ornithine = L-citrulline + phosphate + H(+). It functions in the pathway amino-acid biosynthesis; L-arginine biosynthesis; L-arginine from L-ornithine and carbamoyl phosphate: step 1/3. Reversibly catalyzes the transfer of the carbamoyl group from carbamoyl phosphate (CP) to the N(epsilon) atom of ornithine (ORN) to produce L-citrulline. In Bordetella avium (strain 197N), this protein is Ornithine carbamoyltransferase.